The primary structure comprises 461 residues: Metacaspase-1 (461 aa).

4 stretches are compositionally biased toward gly residues: residues 1–21, 45–66, 74–86, and 105–119; these read MSYP…GYGG, QYGG…GYGP, and PGGQ…GHPG. The disordered stretch occupies residues 1–154; the sequence is MSYPGQGGNT…PQGNQAFGGT (154 aa). Composition is skewed to low complexity over residues 121–131 and 138–148; these read GNQAPPGQYGQ and HGNHNMPPQGN. Residues His-252 and Cys-308 contribute to the active site.

This sequence belongs to the peptidase C14B family.

Its function is as follows. Involved in cell death (apoptosis). The chain is Metacaspase-1 (MCA1) from Yarrowia lipolytica (strain CLIB 122 / E 150) (Yeast).